The following is a 101-amino-acid chain: Small ribosomal subunit protein uS14A (101 aa).

A disordered region spans residues Glu-29–Val-60. Over residues Pro-34–Gln-45 the composition is skewed to polar residues.

It belongs to the universal ribosomal protein uS14 family. In terms of assembly, part of the 30S ribosomal subunit. Contacts proteins S3 and S10.

Functionally, binds 16S rRNA, required for the assembly of 30S particles and may also be responsible for determining the conformation of the 16S rRNA at the A site. In Mycolicibacterium paratuberculosis (strain ATCC BAA-968 / K-10) (Mycobacterium paratuberculosis), this protein is Small ribosomal subunit protein uS14A.